A 113-amino-acid chain; its full sequence is U11-theraphotoxin-Hhn1a (113 aa).

Positions Met-1–Ala-21 are cleaved as a signal peptide. Positions Asp-22 to Arg-74 are excised as a propeptide. The disordered stretch occupies residues Glu-61 to Asp-83. Disulfide bonds link Cys-75–Cys-90, Cys-82–Cys-95, and Cys-89–Cys-110.

It belongs to the neurotoxin 14 (magi-1) family. 01 (HNTX-16) subfamily. As to expression, expressed by the venom gland.

Its subcellular location is the secreted. Probable ion channel inhibitor. The chain is U11-theraphotoxin-Hhn1a from Cyriopagopus hainanus (Chinese bird spider).